Consider the following 820-residue polypeptide: TORTIFOLIA1-like protein 2 (820 aa).

5 HEAT repeats span residues 61–98 (DKVSCFLSCILDTDSEQKSAVRKECIRLMGTLARFHEG), 102–139 (PYLGKMVSSIVKRLKDPDSVVRDACIETMGVLASKMSC), 146–183 (GVFVSLVKPLFEAIGDQNKYVQSGAALCLARVIDSSPE), 187–224 (AIIQRMLMRTVKLLNNSHFIAKPAVIELNRSIILAGGA), and 228–265 (SVLSSAMSSFQDALKNKDWTTRKAASVALMEIAATGEK). Residues 304–321 (PGSDSPEPSETESSVKES) show a composition bias toward low complexity. 3 disordered regions span residues 304–325 (PGSDSPEPSETESSVKESYNGA), 357–377 (PVSARQPPTRYNDDPRKSNQD), and 584–644 (GSTI…GKTG). Basic and acidic residues predominate over residues 367–377 (YNDDPRKSNQD). The span at 584–613 (GSTISPRLSSCTSRTSTDIRNRQSTLSTSK) shows a compositional bias: polar residues.

This chain is TORTIFOLIA1-like protein 2, found in Arabidopsis thaliana (Mouse-ear cress).